Reading from the N-terminus, the 222-residue chain is Small ribosomal subunit protein eS1 (222 aa).

It belongs to the eukaryotic ribosomal protein eS1 family.

In Methanocaldococcus jannaschii (strain ATCC 43067 / DSM 2661 / JAL-1 / JCM 10045 / NBRC 100440) (Methanococcus jannaschii), this protein is Small ribosomal subunit protein eS1.